A 272-amino-acid polypeptide reads, in one-letter code: 5'-nucleotidase SurE (272 aa).

Residues Asp-28, Asp-29, Ser-59, and Asn-115 each coordinate a divalent metal cation.

The protein belongs to the SurE nucleotidase family. It depends on a divalent metal cation as a cofactor.

It is found in the cytoplasm. The enzyme catalyses a ribonucleoside 5'-phosphate + H2O = a ribonucleoside + phosphate. Nucleotidase that shows phosphatase activity on nucleoside 5'-monophosphates. This chain is 5'-nucleotidase SurE, found in Chlorobium chlorochromatii (strain CaD3).